We begin with the raw amino-acid sequence, 130 residues long: Small ribosomal subunit protein uS8 (130 aa).

It belongs to the universal ribosomal protein uS8 family. Part of the 30S ribosomal subunit. Contacts proteins S5 and S12.

Functionally, one of the primary rRNA binding proteins, it binds directly to 16S rRNA central domain where it helps coordinate assembly of the platform of the 30S subunit. This chain is Small ribosomal subunit protein uS8, found in Tolumonas auensis (strain DSM 9187 / NBRC 110442 / TA 4).